The chain runs to 263 residues: 3-deoxy-manno-octulosonate cytidylyltransferase (263 aa).

This sequence belongs to the KdsB family.

It localises to the cytoplasm. It catalyses the reaction 3-deoxy-alpha-D-manno-oct-2-ulosonate + CTP = CMP-3-deoxy-beta-D-manno-octulosonate + diphosphate. The protein operates within nucleotide-sugar biosynthesis; CMP-3-deoxy-D-manno-octulosonate biosynthesis; CMP-3-deoxy-D-manno-octulosonate from 3-deoxy-D-manno-octulosonate and CTP: step 1/1. It participates in bacterial outer membrane biogenesis; lipopolysaccharide biosynthesis. In terms of biological role, activates KDO (a required 8-carbon sugar) for incorporation into bacterial lipopolysaccharide in Gram-negative bacteria. This is 3-deoxy-manno-octulosonate cytidylyltransferase from Burkholderia mallei (strain NCTC 10229).